Here is a 385-residue protein sequence, read N- to C-terminus: Cytochrome b (385 aa).

The next 4 helical transmembrane spans lie at 32–52 (FGSL…TLAM), 76–98 (WLVR…LHIG), 113–133 (TWAI…LGYV), and 179–199 (FFAL…MHLI). Heme b contacts are provided by H82 and H96. Heme b-binding residues include H183 and H197. Position 202 (H202) interacts with a ubiquinone. Transmembrane regions (helical) follow at residues 226–246 (FIFK…IFVF), 290–310 (LLGV…PITD), 322–342 (LSKV…QIGA), and 349–369 (FIEL…VIVP).

The protein belongs to the cytochrome b family. As to quaternary structure, fungal cytochrome b-c1 complex contains 10 subunits; 3 respiratory subunits, 2 core proteins and 5 low-molecular weight proteins. Cytochrome b-c1 complex is a homodimer. Requires heme b as cofactor.

Its subcellular location is the mitochondrion inner membrane. Its function is as follows. Component of the ubiquinol-cytochrome c reductase complex (complex III or cytochrome b-c1 complex) that is part of the mitochondrial respiratory chain. The b-c1 complex mediates electron transfer from ubiquinol to cytochrome c. Contributes to the generation of a proton gradient across the mitochondrial membrane that is then used for ATP synthesis. The sequence is that of Cytochrome b (cob) from Aspergillus tubingensis.